The primary structure comprises 452 residues: Isocitrate dehydrogenase [NADP], mitochondrial (452 aa).

A mitochondrion-targeting transit peptide spans 1–39 (MAGYLRVVRSLCRASGSRPAWAPAALTAPTSQEQTRRHY). N6-acetyllysine occurs at positions 45, 48, 67, and 69. Lys-80 and Lys-106 each carry N6-acetyllysine; alternate. 2 positions are modified to N6-succinyllysine; alternate: Lys-80 and Lys-106. Residues 115 to 117 (TIT) and Arg-122 contribute to the NADP(+) site. Thr-117 contacts substrate. Substrate contacts are provided by residues 134–140 (SPNGTIR) and Arg-149. Lys-155 is modified (N6-acetyllysine). Lys-166 carries the post-translational modification N6-acetyllysine; alternate. Lys-166 is modified (N6-succinyllysine; alternate). Arg-172 contacts substrate. Residues Lys-180 and Lys-193 each carry the N6-acetyllysine; alternate modification. 2 positions are modified to N6-succinyllysine; alternate: Lys-180 and Lys-193. The residue at position 199 (Lys-199) is an N6-acetyllysine. The residue at position 256 (Lys-256) is an N6-acetyllysine; alternate. The residue at position 256 (Lys-256) is an N6-succinyllysine; alternate. Residues Lys-263, Lys-272, Lys-275, and Lys-280 each carry the N6-acetyllysine modification. Lys-282 carries the post-translational modification N6-acetyllysine; alternate. The residue at position 282 (Lys-282) is an N6-succinyllysine; alternate. Asp-291 is a binding site for Mn(2+). Lys-299 provides a ligand contact to NADP(+). Asp-314 is a binding site for Mn(2+). NADP(+) is bound by residues 349–354 (GTVTRH) and Asn-367. The residue at position 384 (Lys-384) is an N6-acetyllysine; alternate. Lys-384 is subject to N6-succinyllysine; alternate. Residues Lys-400, Lys-413, and Lys-442 each carry the N6-acetyllysine modification.

This sequence belongs to the isocitrate and isopropylmalate dehydrogenases family. In terms of assembly, homodimer. The cofactor is Mg(2+). Mn(2+) serves as cofactor. In terms of processing, acetylation at Lys-413 dramatically reduces catalytic activity. Deacetylated by SIRT3.

The protein localises to the mitochondrion. It catalyses the reaction D-threo-isocitrate + NADP(+) = 2-oxoglutarate + CO2 + NADPH. Functionally, plays a role in intermediary metabolism and energy production. It may tightly associate or interact with the pyruvate dehydrogenase complex. In Macaca fascicularis (Crab-eating macaque), this protein is Isocitrate dehydrogenase [NADP], mitochondrial (IDH2).